The sequence spans 87 residues: Small ribosomal subunit protein bS20 (87 aa).

The interval 1–20 (MANIKSQIKRNKTNEKARLR) is disordered.

The protein belongs to the bacterial ribosomal protein bS20 family.

Functionally, binds directly to 16S ribosomal RNA. The protein is Small ribosomal subunit protein bS20 of Corynebacterium efficiens (strain DSM 44549 / YS-314 / AJ 12310 / JCM 11189 / NBRC 100395).